We begin with the raw amino-acid sequence, 436 residues long: Acrosin (436 aa).

An N-terminal signal peptide occupies residues 1–19 (MVEMLPTVAVLVLAVSVVA). Asn-22 carries N-linked (GlcNAc...) asparagine glycosylation. Cystine bridges form between Cys-25-Cys-155, Cys-29-Cys-163, Cys-74-Cys-90, Cys-178-Cys-247, Cys-210-Cys-226, and Cys-237-Cys-267. The Peptidase S1 domain occupies 43-291 (IVSGQSAQLG…YLDWIASKIG (249 aa)). Catalysis depends on charge relay system residues His-89 and Asp-143. Asn-211 is a glycosylation site (N-linked (GlcNAc...) asparagine). Ser-241 functions as the Charge relay system in the catalytic mechanism. Positions 346-436 (PSSTQTSSSL…NKPSEPFLHS (91 aa)) are cleaved as a propeptide — pro-rich.

The protein belongs to the peptidase S1 family. Heavy chain (catalytic) and a light chain linked by two disulfide bonds. Forms a heterodimer with SERPINA5.

The enzyme catalyses Preferential cleavage: Arg-|-Xaa, Lys-|-Xaa.. Inhibited by SERPINA5. Functionally, acrosin is the major protease of mammalian spermatozoa. It is a serine protease of trypsin-like cleavage specificity, it is synthesized in a zymogen form, proacrosin and stored in the acrosome. In Mus musculus (Mouse), this protein is Acrosin (Acr).